A 476-amino-acid polypeptide reads, in one-letter code: Glycogen synthase (476 aa).

Residue lysine 15 coordinates ADP-alpha-D-glucose.

It belongs to the glycosyltransferase 1 family. Bacterial/plant glycogen synthase subfamily.

It carries out the reaction [(1-&gt;4)-alpha-D-glucosyl](n) + ADP-alpha-D-glucose = [(1-&gt;4)-alpha-D-glucosyl](n+1) + ADP + H(+). Its pathway is glycan biosynthesis; glycogen biosynthesis. Its function is as follows. Synthesizes alpha-1,4-glucan chains using ADP-glucose. The chain is Glycogen synthase from Chlamydia pneumoniae (Chlamydophila pneumoniae).